A 103-amino-acid polypeptide reads, in one-letter code: Large ribosomal subunit protein uL24 (103 aa).

The protein belongs to the universal ribosomal protein uL24 family. Part of the 50S ribosomal subunit.

In terms of biological role, one of two assembly initiator proteins, it binds directly to the 5'-end of the 23S rRNA, where it nucleates assembly of the 50S subunit. Functionally, one of the proteins that surrounds the polypeptide exit tunnel on the outside of the subunit. The polypeptide is Large ribosomal subunit protein uL24 (Anoxybacillus flavithermus (strain DSM 21510 / WK1)).